The following is a 181-amino-acid chain: UPF0302 protein lin2035 (181 aa).

This sequence belongs to the UPF0302 family.

This chain is UPF0302 protein lin2035, found in Listeria innocua serovar 6a (strain ATCC BAA-680 / CLIP 11262).